Here is a 100-residue protein sequence, read N- to C-terminus: MPNKKSAEKRVRQSEQRRQKNRGYQKRIKEISKEIDKKIHENAEREELMQLLSKSFKIIDTAKSHGAVHKNYAARKKSKLHLKVKKYLGEMAPESSPVNE.

The segment covering 1–18 (MPNKKSAEKRVRQSEQRR) has biased composition (basic and acidic residues). The disordered stretch occupies residues 1-26 (MPNKKSAEKRVRQSEQRRQKNRGYQK).

Belongs to the bacterial ribosomal protein bS20 family.

In terms of biological role, binds directly to 16S ribosomal RNA. This chain is Small ribosomal subunit protein bS20, found in Petrotoga mobilis (strain DSM 10674 / SJ95).